The sequence spans 144 residues: Peptide methionine sulfoxide reductase MsrB (144 aa).

Positions 6–128 constitute a MsrB domain; sequence KDELKKKLTP…NSAALRFIPK (123 aa). Cysteine 117 serves as the catalytic Nucleophile.

The protein belongs to the MsrB Met sulfoxide reductase family.

The catalysed reaction is L-methionyl-[protein] + [thioredoxin]-disulfide + H2O = L-methionyl-(R)-S-oxide-[protein] + [thioredoxin]-dithiol. The protein is Peptide methionine sulfoxide reductase MsrB of Shouchella clausii (strain KSM-K16) (Alkalihalobacillus clausii).